We begin with the raw amino-acid sequence, 186 residues long: Shikimate kinase (186 aa).

21-26 (GVGKTT) contributes to the ATP binding site. Residue threonine 25 participates in Mg(2+) binding. Substrate-binding residues include aspartate 43, arginine 67, and glycine 90. ATP is bound at residue arginine 129. A substrate-binding site is contributed by arginine 147.

It belongs to the shikimate kinase family. As to quaternary structure, monomer. Mg(2+) is required as a cofactor.

The protein resides in the cytoplasm. It carries out the reaction shikimate + ATP = 3-phosphoshikimate + ADP + H(+). Its pathway is metabolic intermediate biosynthesis; chorismate biosynthesis; chorismate from D-erythrose 4-phosphate and phosphoenolpyruvate: step 5/7. Functionally, catalyzes the specific phosphorylation of the 3-hydroxyl group of shikimic acid using ATP as a cosubstrate. The chain is Shikimate kinase from Bacillus subtilis (strain 168).